A 248-amino-acid chain; its full sequence is Small ribosomal subunit protein uS2 (248 aa).

Belongs to the universal ribosomal protein uS2 family.

This chain is Small ribosomal subunit protein uS2, found in Cupriavidus necator (strain ATCC 17699 / DSM 428 / KCTC 22496 / NCIMB 10442 / H16 / Stanier 337) (Ralstonia eutropha).